Here is a 94-residue protein sequence, read N- to C-terminus: Large ribosomal subunit protein bL25 (94 aa).

The protein belongs to the bacterial ribosomal protein bL25 family. As to quaternary structure, part of the 50S ribosomal subunit; part of the 5S rRNA/L5/L18/L25 subcomplex. Contacts the 5S rRNA. Binds to the 5S rRNA independently of L5 and L18.

In terms of biological role, this is one of the proteins that binds to the 5S RNA in the ribosome where it forms part of the central protuberance. In Yersinia pestis bv. Antiqua (strain Antiqua), this protein is Large ribosomal subunit protein bL25.